An 84-amino-acid chain; its full sequence is Small ribosomal subunit protein uS17 (84 aa).

The protein belongs to the universal ribosomal protein uS17 family. Part of the 30S ribosomal subunit.

Its function is as follows. One of the primary rRNA binding proteins, it binds specifically to the 5'-end of 16S ribosomal RNA. The protein is Small ribosomal subunit protein uS17 of Clostridium botulinum (strain Alaska E43 / Type E3).